A 285-amino-acid chain; its full sequence is Putative sugar uptake protein lmo0169 (285 aa).

A run of 10 helical transmembrane segments spans residues I5–G24, I31–F48, Y53–G71, V84–A106, L116–Y135, I151–I173, A178–I195, W207–S226, I232–L254, and L263–I282.

This sequence belongs to the GRP transporter (TC 2.A.7.5) family.

The protein resides in the cell membrane. The protein is Putative sugar uptake protein lmo0169 of Listeria monocytogenes serovar 1/2a (strain ATCC BAA-679 / EGD-e).